We begin with the raw amino-acid sequence, 281 residues long: 3-methyl-2-oxobutanoate hydroxymethyltransferase (281 aa).

Positions 44 and 83 each coordinate Mg(2+). 3-methyl-2-oxobutanoate contacts are provided by residues 44–45 (DS), D83, and K112. E114 contacts Mg(2+). E180 (proton acceptor) is an active-site residue. Residues 251–281 (RNGTFPGPEHSSRMDPAELAAALGSQDQATE) form a disordered region.

Belongs to the PanB family. As to quaternary structure, homodecamer; pentamer of dimers. Requires Mg(2+) as cofactor.

Its subcellular location is the cytoplasm. The enzyme catalyses 3-methyl-2-oxobutanoate + (6R)-5,10-methylene-5,6,7,8-tetrahydrofolate + H2O = 2-dehydropantoate + (6S)-5,6,7,8-tetrahydrofolate. It functions in the pathway cofactor biosynthesis; (R)-pantothenate biosynthesis; (R)-pantoate from 3-methyl-2-oxobutanoate: step 1/2. Catalyzes the reversible reaction in which hydroxymethyl group from 5,10-methylenetetrahydrofolate is transferred onto alpha-ketoisovalerate to form ketopantoate. The protein is 3-methyl-2-oxobutanoate hydroxymethyltransferase of Chloroflexus aurantiacus (strain ATCC 29364 / DSM 637 / Y-400-fl).